Reading from the N-terminus, the 357-residue chain is Protein RecA (357 aa).

73–80 is an ATP binding site; it reads GPESSGKT.

This sequence belongs to the RecA family.

Its subcellular location is the cytoplasm. Its function is as follows. Can catalyze the hydrolysis of ATP in the presence of single-stranded DNA, the ATP-dependent uptake of single-stranded DNA by duplex DNA, and the ATP-dependent hybridization of homologous single-stranded DNAs. It interacts with LexA causing its activation and leading to its autocatalytic cleavage. This Nitratidesulfovibrio vulgaris (strain DSM 19637 / Miyazaki F) (Desulfovibrio vulgaris) protein is Protein RecA.